The following is a 429-amino-acid chain: Enolase (429 aa).

Gln-168 is a (2R)-2-phosphoglycerate binding site. The Proton donor role is filled by Glu-210. Positions 247, 288, and 315 each coordinate Mg(2+). Lys-340, Arg-369, Ser-370, and Lys-391 together coordinate (2R)-2-phosphoglycerate. Lys-340 acts as the Proton acceptor in catalysis.

This sequence belongs to the enolase family. Requires Mg(2+) as cofactor.

It localises to the cytoplasm. The protein resides in the secreted. Its subcellular location is the cell surface. The catalysed reaction is (2R)-2-phosphoglycerate = phosphoenolpyruvate + H2O. The protein operates within carbohydrate degradation; glycolysis; pyruvate from D-glyceraldehyde 3-phosphate: step 4/5. In terms of biological role, catalyzes the reversible conversion of 2-phosphoglycerate (2-PG) into phosphoenolpyruvate (PEP). It is essential for the degradation of carbohydrates via glycolysis. This chain is Enolase, found in Nostoc punctiforme (strain ATCC 29133 / PCC 73102).